The sequence spans 291 residues: BTB/POZ domain-containing protein 19 (291 aa).

One can recognise a BTB domain in the interval 29-98 (SDVRFVVGQE…LYTNSAKLQR (70 aa)). Positions 134-234 (CEALQVAVTF…LALLAPAELS (101 aa)) constitute a BACK domain.

The sequence is that of BTB/POZ domain-containing protein 19 (BTBD19) from Bos taurus (Bovine).